A 2773-amino-acid polypeptide reads, in one-letter code: MDAEPFDEVDEYTTYPSLPASVICPVADTKTRYELSWQPSGHHPQEEGDDCAVVTLVYAAWALMASRMTSSERVVFDTIDGRPDRPAARPLRVLCASSQTVGEYLQALRAHTSSEESYMASPDCKSKRHPTSSTLIATRTSGDAKSSNGTIGNGLPSLAGYPLVLDLQLRGSRLQATAMSDSRCTEPWIVFRLLIRLEYCMKGLHEADSRTRLADIDLMSPDDVEQIWKWNGTLPAAVERCMHDMFEDQVYSQPLALAVDAWDGRLTYKELDELSEKLAGHLIDADVGPEVIVPLCFEKSMWMPIAMLGVLKAGGSFTLLEPSFPEQRLRTIVEKVNASVMISSPSNMSLSSRLLKRVVELDSCSVKSFSAHPSRPRNSQPSSTAMFAVFTSGSTGVPKGAILTHTNYSSALAYQLQPLGFTKDSRVFDFASYAFDVSVHNVFATLTSGACLCIPSDEDRHNDISKVMVDMRVTISHLTPSVTRLIDPDSQPFLKTMVFTGEPLSVDDATRWWGKVDVVNEYGPAECTINTVNSRPISPEAATNIGLPVGVAAWITDPENHQVLVPIGCVGELLVEGPLVGRGYIGDPIKTAASFIQDPKWLLRGVSGHPGRKGRLYKTGDLVRYCADGSLSYLGRKDAQVKIRGQRVHLGDVEHWTQVCMPEAQRVFADVIEPQAISPVPTLAVFVQSPEMGENTATNERPVQIRALRADVQAKLSQHLPSYMVPTVSFWMETLPMTPTGKMDRRMLRRIGSSFSAEQLAQARADRRDGPKRQPTCEMEERMRNIWARVLGMLPQDIHLESNFFHLGGDSIASMRVVAYARRLGIQVMVADVFQHPSLHDLAKNCSQTLARAPEDIPAFSLLGPHFNHALFVQDMSTRYALDPMTIQDAYPCTRLQEGLMFLTSKRPGDYIEQNVLELARDLSLEGLRNAWEQAVKAMPILRTRIAQHNHVGLVQLVLDDTADWDEAKGLEKYLAADRKRSMGLGEPLSRFALVRDEEGTCKWLVWTIHHAIYDGWSIRLVTDAVAEAYGGRSIPQGPQFQAFIKYVQDQDERAAVNYWQRNLQGFDSAPFPPNVPSVDQPVADAAVAHSFATPSGAHGCITTSMLIRAAWALVVGRMANSNDVVFGSTLHGRNAAVNGLDEMVAPTIATIPVRVRFCSTQYVPSYLQAITQEAAEMMPYEQTGLQRIAALSSDAEKACKFQTHVVIQPEDCIPGRSLLGQWRSDSQDQWFSTYALTVEVWLRSDDIFASAMFDSRTIQSWVVTGMLQRLEWTMHQLHHATPSQTLGEINMSSAEDLEQIWQWNERVPEPVNRCIHDLLADQVQARPDSPAICAWDGELTYRKLDELSTRMSHSLLQLGAGFHKGLVPLCFDKSMWTAVAILGVLKAGVGFILLDPHLPEQRMRDIVDQVGSKVIVTCPTREILCSRLAEATVAISWDYFSGQLDWTQQELPSVSPSSTAYVVFTSGSTGTPKGVVVTHANAVSAQHHQLEPMGHTPESRLFDFASYSFDVSISNIVSMLACGGCLCVPSESDRTDDMEKSIVSLRVNALDLTPSTLQLLSPERLPAVRQLTLGGEPLREADVEKWCGKTRICNAYGPSECTPTATINSNAMEPQMATHIGKGAGVVTWIVDADDHDELLPLGCTGELLLEGPLVGRGYFNDSAKTAAAFIEDPKWLLRGSISHPGRQGRLYKTGDLVKYNRDGSLAFVGRKDTQVKVRGQRVEPGEIEAVLRSHESVDGAVVVFHRLTDQELWLAAFVTTREDDGKIPQSQSLAHDETQLKQKRIQAWEEEFEGETYLAIGATEAENIGRDFVGWSSMYDGSEINKVEMNEWLDDTIATMLNGGPAGHVLEIGSGSGMMLFNLANHSLQSYIGVDPAMRAVDFTTKAAKSVPDLADKVNVFKGTAEDIMNLDMPIHSELAVMNSVVQYFPSQDYLFNIIQHLASLGSIKTIFVGDIRSHALHKEFMARRALHIAGKDASREEFSGIMENLLKGEPELLVDPGFFTSLPHRIHGVTHVEILPKRMKATNELSSYRYAAVLHVNSHGEQAKDGRAQDIGADEWIDYVSNGLDRQAVSGLLGTASRVAISNIPYSKTIYEREIVNAVEASKNIPKLERESEWLAAALQASQEHSSLCAFDLAELAQLAGYRVECSWARQYSQRGGLDAVFYCGGSGTDSERRTLFRFPTDHEGRPCHVLSTNPLEQQRKSKLRGDLEQLLRSKLPSYMVPQAIKILDKMPVNHTGKIDRSMLSESLQQKAPPTARKRLPSTAPERAMQQIWSKVLSIESSQIGLDDGFIKLGGNSLSAMKVVSMAREEGIRLEVADMFHHSTTSIAHLLQTAAAGVSESGAALPGVTSDRLLSDLARYDCTIAMAQSEAANKRLSATSHGGIRDTRLTVVLTGANGFIGTQILRQLLDHGRFSRVIAIVRGTSASKARQRAIDAAKNAQWWSEFYSSELEVWRGDLALPRLGLGKENWNTLADGTVDVFIHNGASVHFMKSYSALQAANVESTAQVLRVAAENPSMRVVYVSSARCCDPELEREEDVAKALADRPNGYTTTKFIAEALVKRAAARGLGRRDQFAVVSPGLVVGTPTEGVANADDWLWRMTAACIRVGVVNGEESDNWIPIADAAATATTVIETSLGRSSGIVTQVKGGLTMGEFWETLRAIGYTLRGEDSSTCMAAIRQDVEKNRDTHPLGALSDMLQDLADTARSQWADSWRTGGLSSPARLKLALVKSAGFLSKVGVLPLPDGNDEPAQARENLRAFTRSGG.

The tract at residues F246–R644 is adenylation 1. Residues Q774–L850 form the Carrier 1 domain. Residue S811 is modified to O-(pantetheine 4'-phosphoryl)serine. Positions Q888–I1301 are condensation. An adenylation 2 region spans residues A1321–R1720. Positions I1810–S1949 are methylation (Met) domain. The interval M2250 to A2271 is disordered. Residues L2267–V2345 form the Carrier 2 domain. An O-(pantetheine 4'-phosphoryl)serine modification is found at S2304. The interval T2397 to S2715 is thiesterase (TE) domain.

This sequence belongs to the NRP synthetase family. It depends on pantetheine 4'-phosphate as a cofactor.

The catalysed reaction is (S)-1-pyrroline-5-carboxylate + L-arginine + S-adenosyl-L-methionine + 2 ATP = peramine + 2 AMP + S-adenosyl-L-homocysteine + 2 diphosphate + H2O + 2 H(+). Functionally, nonribosomal peptide synthetase involved in the biosynthesis of peramine, a pyrrolopyrazine synthesized in association with the grass host that protects the plant from insect herbivory. The single multifunctional NRPS perA seems to be responsible for all catalytic steps in the biosynthesis of peramine. The condensation domain of perA is proposed to catalyze formation of a peptide bond between 1-pyrroline-5-carboxylate and arginine. The methylation domain of perA would catalyze the N-methylation of the alpha-amino group of arginine. The reductase domain is proposed to be responsible for reduction of the thioester and the cyclization to form an iminium ion resulting in release from the peptide synthetase. Deprotonation of this intermediate and oxidation of the pyrroline ring would give rise to peramine. This final oxidation to give the pyrrole functionality may be spontaneous. This is Peramine synthetase A from Epichloe festucae (strain Fl1).